A 187-amino-acid polypeptide reads, in one-letter code: Large ribosomal subunit protein bL25 (187 aa).

This sequence belongs to the bacterial ribosomal protein bL25 family. CTC subfamily. Part of the 50S ribosomal subunit; part of the 5S rRNA/L5/L18/L25 subcomplex. Contacts the 5S rRNA. Binds to the 5S rRNA independently of L5 and L18.

In terms of biological role, this is one of the proteins that binds to the 5S RNA in the ribosome where it forms part of the central protuberance. The polypeptide is Large ribosomal subunit protein bL25 (Tropheryma whipplei (strain TW08/27) (Whipple's bacillus)).